The sequence spans 228 residues: 3-oxoadipate CoA-transferase subunit A (228 aa).

25 to 31 (GGFGTAG) contacts CoA.

The protein belongs to the 3-oxoacid CoA-transferase subunit A family. In terms of assembly, heterodimer.

The catalysed reaction is 3-oxoadipate + succinyl-CoA = 3-oxoadipyl-CoA + succinate. It participates in aromatic compound metabolism; beta-ketoadipate pathway; acetyl-CoA and succinyl-CoA from 3-oxoadipate: step 1/2. This is 3-oxoadipate CoA-transferase subunit A (pcaI) from Acinetobacter baylyi (strain ATCC 33305 / BD413 / ADP1).